The primary structure comprises 108 residues: Thiosulfate sulfurtransferase GlpE (108 aa).

In terms of domain architecture, Rhodanese spans 17–105 (HQGAAVLVDI…WHRRFPADVA (89 aa)). Cys65 acts as the Cysteine persulfide intermediate in catalysis.

Belongs to the GlpE family.

It localises to the cytoplasm. It carries out the reaction thiosulfate + hydrogen cyanide = thiocyanate + sulfite + 2 H(+). It catalyses the reaction thiosulfate + [thioredoxin]-dithiol = [thioredoxin]-disulfide + hydrogen sulfide + sulfite + 2 H(+). Its function is as follows. Transferase that catalyzes the transfer of sulfur from thiosulfate to thiophilic acceptors such as cyanide or dithiols. May function in a CysM-independent thiosulfate assimilation pathway by catalyzing the conversion of thiosulfate to sulfite, which can then be used for L-cysteine biosynthesis. This Salmonella choleraesuis (strain SC-B67) protein is Thiosulfate sulfurtransferase GlpE.